We begin with the raw amino-acid sequence, 108 residues long: UPF0235 protein Rpal_0418 (108 aa).

Belongs to the UPF0235 family.

The chain is UPF0235 protein Rpal_0418 from Rhodopseudomonas palustris (strain TIE-1).